The chain runs to 391 residues: Multidrug resistance protein MdtL (391 aa).

12 helical membrane-spanning segments follow: residues 4 to 24, 42 to 62, 69 to 89, 93 to 113, 131 to 151, 158 to 178, 203 to 222, 245 to 265, 269 to 289, 293 to 313, 331 to 351, and 356 to 376; these read FLIC…MYLV, IAFS…GKVA, PVAI…SLAE, LFLA…VVAF, LLNG…HLIM, SLFW…LFIL, FFLS…LTFV, ALTA…LGIF, TLMI…AVSP, VSLF…GVAM, LGIA…VVGI, and MLIG…MFVA.

This sequence belongs to the major facilitator superfamily. DHA1 family. MdtL (TC 2.A.1.2.22) subfamily.

Its subcellular location is the cell inner membrane. In terms of biological role, confers resistance to chloramphenicol. The sequence is that of Multidrug resistance protein MdtL from Escherichia coli O9:H4 (strain HS).